Reading from the N-terminus, the 318-residue chain is MNASALPHMHPSRSFQGLILTLHSYWAAQGCVILQPYDMEVGAGTFHPATTLRSLGPRPWNAAYVQPSRRPKDGRYGENPNRLQHYYQYQVILKPNPPNLQELYLGSLAAIGLDPLLHDIRFVEDDWESPTLGAWGLGWECWCDGMEVSQFTYFQQVCGIECAPVSGELTYGLERLAMYVQGVDNVYDLNFNGLEGSDKVTYGEVFLQAEQEYSRHNFEYANTEMLFRHFEDAERECRALLEAGAPRPSDNAALHRMVFPAYDQCIKASHVFNLLDARGVISVTERQSYILRVRDLAKACGEAFLNTEAGGATLATAA.

Belongs to the class-II aminoacyl-tRNA synthetase family. As to quaternary structure, tetramer of two alpha and two beta subunits.

Its subcellular location is the cytoplasm. It catalyses the reaction tRNA(Gly) + glycine + ATP = glycyl-tRNA(Gly) + AMP + diphosphate. This is Glycine--tRNA ligase alpha subunit from Chelativorans sp. (strain BNC1).